The primary structure comprises 374 residues: uncharacterized protein (374 aa).

The N-terminal stretch at 1-23 (MDSKWFFIVLISFLLVLPSIVTP) is a signal peptide. The segment at 66-374 (SSSSSSSSSS…SSSSSSSGEN (309 aa)) is disordered.

It is found in the secreted. This is an uncharacterized protein from Dictyostelium discoideum (Social amoeba).